Consider the following 459-residue polypeptide: Protein ABHD15 (459 aa).

An N-terminal signal peptide occupies residues 1 to 28; sequence MPPWAAALALLLAALALLLLRPWKRAVG. Catalysis depends on charge relay system residues D351 and H382. S425 carries the post-translational modification Phosphoserine.

It belongs to the AB hydrolase superfamily. AB hydrolase 4 family. As to quaternary structure, interacts with PDE3B; this interaction regulates PDE3B's stability and expression and, thereby, impacts the antilipolytic action of insulin. Mainly expressed in adipocytes and adipose depots, followed by a weak expression in liver and pancreas. In white adipose tissue (WAT), only expressed in mature adipocytes and primary adipocytes differentiated from stromal vascular cells (SVCs), but not in undifferentiated SVCs.

It localises to the secreted. May regulate adipocyte lipolysis and liver lipid accumulation. This is Protein ABHD15 from Mus musculus (Mouse).